Reading from the N-terminus, the 328-residue chain is MIEKIWSGESPLWRLLLPLSWLYGLVSGAIRLCYKLKLKRAWRAPVPVVVVGNLTAGGNGKTPVVVWLVEQLQQRGIRVGVVSRGYGGKAESYPLLLSADTTTAQAGDEPVLIYQRTDAPVAVSPVRSDAVKAILAQHPDVQIIVTDDGLQHYRLARNVEIVVIDGVRRFGNGWWLPAGPMRERAGRLKSVDAVIVNGGVPRSGEIPMHLLPGQAVNLRTGTRCDVAQLEHVVAMAGIGHPPRFFATLKMCGVQPEKCVPLADHQSLNHADVSALVSAGQTLVMTEKDAVKCRAFAEENWWYLPVDAQLSGDEPAKLLTQLTLLASGN.

Position 55–62 (55–62) interacts with ATP; it reads TAGGNGKT.

This sequence belongs to the LpxK family.

The catalysed reaction is a lipid A disaccharide + ATP = a lipid IVA + ADP + H(+). The protein operates within glycolipid biosynthesis; lipid IV(A) biosynthesis; lipid IV(A) from (3R)-3-hydroxytetradecanoyl-[acyl-carrier-protein] and UDP-N-acetyl-alpha-D-glucosamine: step 6/6. Its function is as follows. Transfers the gamma-phosphate of ATP to the 4'-position of a tetraacyldisaccharide 1-phosphate intermediate (termed DS-1-P) to form tetraacyldisaccharide 1,4'-bis-phosphate (lipid IVA). The protein is Tetraacyldisaccharide 4'-kinase of Escherichia coli (strain K12 / MC4100 / BW2952).